The chain runs to 285 residues: Dermonecrotic toxin LlSicTox-alphaIII1ii (285 aa).

His12 is an active-site residue. Mg(2+)-binding residues include Glu32 and Asp34. Residue His47 is the Nucleophile of the active site. Cys51 and Cys57 are oxidised to a cystine. A Mg(2+)-binding site is contributed by Asp91.

Belongs to the arthropod phospholipase D family. Class I subfamily. Mg(2+) is required as a cofactor. In terms of tissue distribution, expressed by the venom gland.

It localises to the secreted. The catalysed reaction is an N-(acyl)-sphingosylphosphocholine = an N-(acyl)-sphingosyl-1,3-cyclic phosphate + choline. It catalyses the reaction an N-(acyl)-sphingosylphosphoethanolamine = an N-(acyl)-sphingosyl-1,3-cyclic phosphate + ethanolamine. It carries out the reaction a 1-acyl-sn-glycero-3-phosphocholine = a 1-acyl-sn-glycero-2,3-cyclic phosphate + choline. The enzyme catalyses a 1-acyl-sn-glycero-3-phosphoethanolamine = a 1-acyl-sn-glycero-2,3-cyclic phosphate + ethanolamine. Its function is as follows. Dermonecrotic toxins cleave the phosphodiester linkage between the phosphate and headgroup of certain phospholipids (sphingolipid and lysolipid substrates), forming an alcohol (often choline) and a cyclic phosphate. This toxin acts on sphingomyelin (SM) with high activity (56.8 U/mg). It may also act on ceramide phosphoethanolamine (CPE), lysophosphatidylcholine (LPC) and lysophosphatidylethanolamine (LPE), but not on lysophosphatidylserine (LPS), and lysophosphatidylglycerol (LPG). It acts by transphosphatidylation, releasing exclusively cyclic phosphate products as second products. Induces dermonecrosis, hemolysis, increased vascular permeability, edema, inflammatory response, and platelet aggregation. Is lethal to mice. The chain is Dermonecrotic toxin LlSicTox-alphaIII1ii from Loxosceles laeta (South American recluse spider).